We begin with the raw amino-acid sequence, 412 residues long: [Pyruvate dehydrogenase (acetyl-transferring)] kinase isozyme 4, mitochondrial (412 aa).

The 231-residue stretch at 138–368 (ILEYKDTCTV…DAIIYLKALS (231 aa)) folds into the Histidine kinase domain. Residues 254 to 261 (ELFKNAMR), aspartate 293, 312 to 313 (ST), and 329 to 334 (GFGYGL) contribute to the ATP site.

Belongs to the PDK/BCKDK protein kinase family. As to quaternary structure, homodimer. Interacts with the pyruvate dehydrogenase complex subunit DLAT, and is part of the multimeric pyruvate dehydrogenase complex that contains multiple copies of pyruvate dehydrogenase (E1), dihydrolipoamide acetyltransferase (DLAT, E2) and lipoamide dehydrogenase (DLD, E3).

Its subcellular location is the mitochondrion matrix. It catalyses the reaction L-seryl-[pyruvate dehydrogenase E1 alpha subunit] + ATP = O-phospho-L-seryl-[pyruvate dehydrogenase E1 alpha subunit] + ADP + H(+). Kinase that plays a key role in regulation of glucose and fatty acid metabolism and homeostasis via phosphorylation of the pyruvate dehydrogenase subunits PDHA1 and PDHA2. This inhibits pyruvate dehydrogenase activity, and thereby regulates metabolite flux through the tricarboxylic acid cycle, down-regulates aerobic respiration and inhibits the formation of acetyl-coenzyme A from pyruvate. Inhibition of pyruvate dehydrogenase decreases glucose utilization and increases fat metabolism in response to prolonged fasting and starvation. Plays an important role in maintaining normal blood glucose levels under starvation, and is involved in the insulin signaling cascade. Via its regulation of pyruvate dehydrogenase activity, plays an important role in maintaining normal blood pH and in preventing the accumulation of ketone bodies under starvation. In the fed state, mediates cellular responses to glucose levels and to a high-fat diet. Regulates both fatty acid oxidation and de novo fatty acid biosynthesis. Plays a role in the generation of reactive oxygen species. Protects detached epithelial cells against anoikis. Plays a role in cell proliferation via its role in regulating carbohydrate and fatty acid metabolism. This Mus musculus (Mouse) protein is [Pyruvate dehydrogenase (acetyl-transferring)] kinase isozyme 4, mitochondrial (Pdk4).